The chain runs to 837 residues: Outer membrane usher protein HifC (837 aa).

The first 26 residues, 1–26 (MKTKIFPLNKIAFACSLLLANPLAWA), serve as a signal peptide directing secretion. An intrachain disulfide couples Cys-813 to Cys-833.

Belongs to the fimbrial export usher family.

Its subcellular location is the cell outer membrane. Essential for piliation. This chain is Outer membrane usher protein HifC (hifC), found in Haemophilus influenzae.